Consider the following 109-residue polypeptide: MTFTKACSVDEVPPGEALQVSHDAQKVAIFNVDGEFFATQDQCTHGEWSLSEGGYLDGDVVECSLHMGKFCVRTGKVKSPPPCEPLKVYPIRIEGRDVLVDFSRAALHA.

The Rieske domain maps to 4 to 100 (TKACSVDEVP…IRIEGRDVLV (97 aa)). The [2Fe-2S] cluster site is built by Cys43, His45, Cys63, and His66.

The protein belongs to the bacterial ring-hydroxylating dioxygenase ferredoxin component family. In terms of assembly, this dioxygenase system consists of four proteins: the two subunits of the hydroxylase component (BphA1 and BphA2), a ferredoxin (BphA3) and a ferredoxin reductase (BphA4).

Its function is as follows. This protein seems to be a 2Fe-2S ferredoxin. This is Biphenyl dioxygenase ferredoxin subunit (bphA3) from Pseudomonas sp. (strain KKS102).